Reading from the N-terminus, the 120-residue chain is Large ribosomal subunit protein uL18 (120 aa).

The protein belongs to the universal ribosomal protein uL18 family. As to quaternary structure, part of the 50S ribosomal subunit; part of the 5S rRNA/L5/L18/L25 subcomplex. Contacts the 5S and 23S rRNAs.

Its function is as follows. This is one of the proteins that bind and probably mediate the attachment of the 5S RNA into the large ribosomal subunit, where it forms part of the central protuberance. The chain is Large ribosomal subunit protein uL18 from Macrococcus caseolyticus (strain JCSC5402) (Macrococcoides caseolyticum).